The chain runs to 114 residues: Gene 37 protein (114 aa).

The polypeptide is Gene 37 protein (37) (Mycobacterium (Mycobacteriophage L5)).